We begin with the raw amino-acid sequence, 266 residues long: NAD-capped RNA hydrolase NudC (266 aa).

A substrate-binding site is contributed by R74. Zn(2+)-binding residues include C103, C106, C121, and C124. Y129 is a substrate binding site. A Nudix hydrolase domain is found at P130 to T253. The a divalent metal cation site is built by A163, E179, and E183. The Nudix box motif lies at G164–G185. Q197–N204 contributes to the substrate binding site. A divalent metal cation is bound at residue E224. A substrate-binding site is contributed by A246.

This sequence belongs to the Nudix hydrolase family. NudC subfamily. In terms of assembly, homodimer. Mg(2+) is required as a cofactor. The cofactor is Mn(2+). Zn(2+) serves as cofactor.

The catalysed reaction is a 5'-end NAD(+)-phospho-ribonucleoside in mRNA + H2O = a 5'-end phospho-adenosine-phospho-ribonucleoside in mRNA + beta-nicotinamide D-ribonucleotide + 2 H(+). It carries out the reaction NAD(+) + H2O = beta-nicotinamide D-ribonucleotide + AMP + 2 H(+). The enzyme catalyses NADH + H2O = reduced beta-nicotinamide D-ribonucleotide + AMP + 2 H(+). Its function is as follows. mRNA decapping enzyme that specifically removes the nicotinamide adenine dinucleotide (NAD) cap from a subset of mRNAs by hydrolyzing the diphosphate linkage to produce nicotinamide mononucleotide (NMN) and 5' monophosphate mRNA. The NAD-cap is present at the 5'-end of some mRNAs and stabilizes RNA against 5'-processing. Has preference for mRNAs with a 5'-end purine. Catalyzes the hydrolysis of a broad range of dinucleotide pyrophosphates. In Photobacterium profundum (strain SS9), this protein is NAD-capped RNA hydrolase NudC.